We begin with the raw amino-acid sequence, 192 residues long: Fe/S biogenesis protein NfuA (192 aa).

2 residues coordinate [4Fe-4S] cluster: Cys-149 and Cys-152.

It belongs to the NfuA family. In terms of assembly, homodimer. The cofactor is [4Fe-4S] cluster.

Functionally, involved in iron-sulfur cluster biogenesis. Binds a 4Fe-4S cluster, can transfer this cluster to apoproteins, and thereby intervenes in the maturation of Fe/S proteins. Could also act as a scaffold/chaperone for damaged Fe/S proteins. This Shewanella frigidimarina (strain NCIMB 400) protein is Fe/S biogenesis protein NfuA.